Here is a 251-residue protein sequence, read N- to C-terminus: 5'-nucleotidase SurE (251 aa).

A divalent metal cation contacts are provided by aspartate 8, aspartate 9, serine 40, and asparagine 95.

The protein belongs to the SurE nucleotidase family. The cofactor is a divalent metal cation.

Its subcellular location is the cytoplasm. The enzyme catalyses a ribonucleoside 5'-phosphate + H2O = a ribonucleoside + phosphate. Its function is as follows. Nucleotidase that shows phosphatase activity on nucleoside 5'-monophosphates. This is 5'-nucleotidase SurE from Lawsonia intracellularis (strain PHE/MN1-00).